A 134-amino-acid polypeptide reads, in one-letter code: D-ribose pyranase (134 aa).

The Proton donor role is filled by histidine 20. Substrate contacts are provided by residues aspartate 28, histidine 101, and tyrosine 123–asparagine 125.

Belongs to the RbsD / FucU family. RbsD subfamily. Homodecamer.

It localises to the cytoplasm. It carries out the reaction beta-D-ribopyranose = beta-D-ribofuranose. It participates in carbohydrate metabolism; D-ribose degradation; D-ribose 5-phosphate from beta-D-ribopyranose: step 1/2. In terms of biological role, catalyzes the interconversion of beta-pyran and beta-furan forms of D-ribose. This is D-ribose pyranase from Pseudomonas entomophila (strain L48).